The following is a 420-amino-acid chain: LanC-like protein 3 (420 aa).

Belongs to the LanC-like protein family.

The sequence is that of LanC-like protein 3 (LANCL3) from Homo sapiens (Human).